Consider the following 533-residue polypeptide: Chromosomal replication initiator protein DnaA (533 aa).

Residues 1–72 are domain I, interacts with DnaA modulators; sequence MNDFWQHCSA…DLARDFWNAP (72 aa). A domain II region spans residues 72 to 196; that stretch reads PIEVQFVLDP…EAADSMYERS (125 aa). The tract at residues 83-120 is disordered; the sequence is AGQRSPAGATPLAPRAPLPSANPAPVAPGPASAPAVDA. A compositionally biased stretch (pro residues) spans 96-110; the sequence is PRAPLPSANPAPVAP. Positions 111 to 120 are enriched in low complexity; that stretch reads GPASAPAVDA. The domain III, AAA+ region stretch occupies residues 197-413; the sequence is KLNPVLTFDN…GALRKILAYS (217 aa). ATP is bound by residues Gly-241, Gly-243, Lys-244, and Thr-245. The domain IV, binds dsDNA stretch occupies residues 414–533; it reads KFHGREITIE…LHVLEQTLKG (120 aa).

It belongs to the DnaA family. Oligomerizes as a right-handed, spiral filament on DNA at oriC.

It is found in the cytoplasm. Functionally, plays an essential role in the initiation and regulation of chromosomal replication. ATP-DnaA binds to the origin of replication (oriC) to initiate formation of the DNA replication initiation complex once per cell cycle. Binds the DnaA box (a 9 base pair repeat at the origin) and separates the double-stranded (ds)DNA. Forms a right-handed helical filament on oriC DNA; dsDNA binds to the exterior of the filament while single-stranded (ss)DNA is stabiized in the filament's interior. The ATP-DnaA-oriC complex binds and stabilizes one strand of the AT-rich DNA unwinding element (DUE), permitting loading of DNA polymerase. After initiation quickly degrades to an ADP-DnaA complex that is not apt for DNA replication. Binds acidic phospholipids. The chain is Chromosomal replication initiator protein DnaA from Burkholderia pseudomallei (strain 1710b).